The chain runs to 460 residues: NADH-ubiquinone oxidoreductase chain 4 (460 aa).

Helical transmembrane passes span 20–42 (AKWL…LSWL), 61–81 (PLST…VLAS), 94–113 (RTYI…AFGA), 117–139 (IMFY…RWGN), 148–168 (TYFL…LLLL), 195–215 (LWWA…GVHL), 225–245 (PIAG…YGMM), 258–278 (LAYP…SICL), 285–304 (SLIA…GILI), 308–330 (WGFT…LFCL), 351–371 (MILP…LALP), 394–414 (LLLT…LFLM), and 436–456 (LLIT…ELMW).

Belongs to the complex I subunit 4 family.

The protein localises to the mitochondrion membrane. The enzyme catalyses a ubiquinone + NADH + 5 H(+)(in) = a ubiquinol + NAD(+) + 4 H(+)(out). Its function is as follows. Core subunit of the mitochondrial membrane respiratory chain NADH dehydrogenase (Complex I) that is believed to belong to the minimal assembly required for catalysis. Complex I functions in the transfer of electrons from NADH to the respiratory chain. The immediate electron acceptor for the enzyme is believed to be ubiquinone. The sequence is that of NADH-ubiquinone oxidoreductase chain 4 (MT-ND4) from Salmo salar (Atlantic salmon).